We begin with the raw amino-acid sequence, 423 residues long: Probable sucrose-phosphatase 1 (423 aa).

This sequence belongs to the sucrose phosphatase family. Homodimer. Mg(2+) serves as cofactor.

The enzyme catalyses sucrose 6(F)-phosphate + H2O = sucrose + phosphate. Its pathway is glycan biosynthesis; sucrose biosynthesis; sucrose from D-fructose 6-phosphate and UDP-alpha-D-glucose: step 2/2. Catalyzes the final step of sucrose synthesis. In Arabidopsis thaliana (Mouse-ear cress), this protein is Probable sucrose-phosphatase 1 (SPP1).